Consider the following 152-residue polypeptide: Regulatory protein RecX (152 aa).

The protein belongs to the RecX family.

Its subcellular location is the cytoplasm. Functionally, modulates RecA activity. The sequence is that of Regulatory protein RecX from Haemophilus influenzae (strain PittGG).